Reading from the N-terminus, the 30-residue chain is Cyclotide hyen-G (30 aa).

Residues 1-30 (GLPCGESCVYIPCISTVLGCSCSNKVCYRD) constitute a cross-link (cyclopeptide (Gly-Asp)). Cystine bridges form between C4/C20, C8/C22, and C13/C27.

Post-translationally, this is a cyclic peptide. Detected in stems (at protein level).

In terms of biological role, probably participates in a plant defense mechanism. The chain is Cyclotide hyen-G from Pigea enneasperma (Spade flower).